Consider the following 918-residue polypeptide: Glutamate receptor ionotropic, kainate 1 (918 aa).

The first 30 residues, 1-30 (MELGTLLAQPGLWTRDTSWALLYFLCYILP), serve as a signal peptide directing secretion. The Extracellular segment spans residues 31–576 (QTAPQVLRIG…VFSFLNPLSP (546 aa)). N-linked (GlcNAc...) asparagine glycosylation is found at N68, N74, N276, N379, N428, N439, and N446. Positions 531, 533, and 538 each coordinate L-glutamate. N561 carries N-linked (GlcNAc...) asparagine glycosylation. Residues 577–597 (DIWMYVLLACLGVSCVLFVIA) form a helical membrane-spanning segment. Topologically, residues 598–653 (RFTPYEWYNPHPCNPDSDVVENNFTLLNSFWFGVGALMQQGSELMPKALSTRIVGG) are cytoplasmic. Residues 654–674 (IWWFFTLIIISSYTANLAAFL) traverse the membrane as a helical segment. Over 675-834 (TVERMESPID…KEASALGVEN (160 aa)) the chain is Extracellular. S704 and T705 together coordinate L-glutamate. S725 is modified (phosphoserine; by PKC). E753 serves as a coordination point for L-glutamate. Position 761 is a phosphothreonine; by PKC (T761). A disulfide bridge connects residues C765 and C819. The N-linked (GlcNAc...) asparagine glycan is linked to N766. A helical transmembrane segment spans residues 835 to 855 (IGGIFIVLAAGLVLSVFVAIG). Over 856–918 (EFIYKSRKNN…IRKQSSVHTV (63 aa)) the chain is Cytoplasmic.

This sequence belongs to the glutamate-gated ion channel (TC 1.A.10.1) family. GRIK1 subfamily. Homotetramer or heterotetramer of pore-forming glutamate receptor subunits. Tetramers may be formed by the dimerization of dimers. Can form functional heteromeric receptors with GRIK4 and GRIK5. Interacts with KLHL17.

The protein resides in the cell membrane. Its subcellular location is the postsynaptic cell membrane. It catalyses the reaction Ca(2+)(in) = Ca(2+)(out). Ionotropic glutamate receptor that functions as a cation-permeable ligand-gated ion channel, gated by L-glutamate and the glutamatergic agonist kainic acid. L-glutamate acts as an excitatory neurotransmitter at many synapses in the central nervous system. Binding of the excitatory neurotransmitter L-glutamate induces a conformation change, leading to the opening of the cation channel, and thereby converts the chemical signal to an electrical impulse. The receptor then desensitizes rapidly and enters a transient inactive state, characterized by the presence of bound agonist. This chain is Glutamate receptor ionotropic, kainate 1 (GRIK1), found in Macaca fascicularis (Crab-eating macaque).